The chain runs to 264 residues: 3-methyl-2-oxobutanoate hydroxymethyltransferase (264 aa).

The Mg(2+) site is built by Asp45 and Asp84. Residues 45–46, Asp84, and Lys112 contribute to the 3-methyl-2-oxobutanoate site; that span reads DS. Residue Glu114 participates in Mg(2+) binding. Glu181 acts as the Proton acceptor in catalysis.

The protein belongs to the PanB family. Homodecamer; pentamer of dimers. It depends on Mg(2+) as a cofactor.

Its subcellular location is the cytoplasm. The catalysed reaction is 3-methyl-2-oxobutanoate + (6R)-5,10-methylene-5,6,7,8-tetrahydrofolate + H2O = 2-dehydropantoate + (6S)-5,6,7,8-tetrahydrofolate. It functions in the pathway cofactor biosynthesis; (R)-pantothenate biosynthesis; (R)-pantoate from 3-methyl-2-oxobutanoate: step 1/2. In terms of biological role, catalyzes the reversible reaction in which hydroxymethyl group from 5,10-methylenetetrahydrofolate is transferred onto alpha-ketoisovalerate to form ketopantoate. The chain is 3-methyl-2-oxobutanoate hydroxymethyltransferase from Vibrio cholerae serotype O1 (strain ATCC 39541 / Classical Ogawa 395 / O395).